A 201-amino-acid polypeptide reads, in one-letter code: Adenylyl-sulfate kinase (201 aa).

Gly35–Ser42 lines the ATP pocket. Ser109 functions as the Phosphoserine intermediate in the catalytic mechanism.

Belongs to the APS kinase family.

The catalysed reaction is adenosine 5'-phosphosulfate + ATP = 3'-phosphoadenylyl sulfate + ADP + H(+). It participates in sulfur metabolism; hydrogen sulfide biosynthesis; sulfite from sulfate: step 2/3. Catalyzes the synthesis of activated sulfate. This Erwinia tasmaniensis (strain DSM 17950 / CFBP 7177 / CIP 109463 / NCPPB 4357 / Et1/99) protein is Adenylyl-sulfate kinase.